We begin with the raw amino-acid sequence, 273 residues long: UPF0380 protein YubP (273 aa).

This sequence belongs to the UPF0380 family.

This Escherichia coli (strain K12) protein is UPF0380 protein YubP (yubP).